Reading from the N-terminus, the 523-residue chain is Calcium uptake protein 3, mitochondrial (523 aa).

The transit peptide at Met-1–Arg-6 directs the protein to the mitochondrion. The disordered stretch occupies residues Leu-18–Glu-48. Residues Lys-225 to Lys-260 form the EF-hand 1 domain. Ca(2+) contacts are provided by Asp-238, Asp-240, Asn-242, Met-244, Asp-246, and Glu-249. The EF-hand 2; degenerate domain maps to Ile-414–Leu-429. The EF-hand 3 domain maps to Leu-463–Arg-498. Ca(2+) is bound by residues Asp-476, Asp-478, Asp-480, Gln-482, and Glu-487.

It belongs to the MICU1 family. MICU3 subfamily. As to quaternary structure, heterodimer; disulfide-linked; heterodimerizes with MICU1. Component of the uniplex complex, composed of MCU, EMRE/SMDT1, MICU1 and MICU3 in a 4:4:1:1 stoichiometry.

It localises to the mitochondrion intermembrane space. Its subcellular location is the mitochondrion inner membrane. Its function is as follows. Tissue-specific calcium sensor of the mitochondrial calcium uniporter (MCU) channel, which specifically regulates MCU channel activity in the central nervous system and skeletal muscle. Senses calcium level via its EF-hand domains: compared to MICU1 and MICU2, MICU3 has a higher affinity for calcium. MICU1 and MICU3 form a disulfide-linked heterodimer that stimulates and inhibits MCU activity, depending on the concentration of calcium. At low calcium levels, MICU1 occludes the pore of the MCU channel, preventing mitochondrial calcium uptake. At higher calcium levels, calcium-binding to MICU1 and MICU3 induces a conformational change that weakens MCU-MICU1 interactions and moves the MICU1-MICU3 heterodimer away from the pore, allowing calcium permeation through the MCU channel. The high calcium affinity of MICU3 lowers the calcium threshold necessary for calcium permeation through the MCU channel. The MICU1-MICU3 heterodimer promotes flexibility of neurotransmission in neuronal cells by enhancing mitochondrial calcium uptake in presynapses. It is also required to increase mitochondrial calcium uptake in skeletal muscle cells, thereby increasing ATP production. In Rattus norvegicus (Rat), this protein is Calcium uptake protein 3, mitochondrial.